The following is a 382-amino-acid chain: Proton extrusion protein PxcA (382 aa).

4 helical membrane-spanning segments follow: residues 162-182 (VLLL…TYLI), 257-277 (AIKN…VCLM), 305-325 (IILF…SVLL), and 340-360 (FVNL…KYWI).

It belongs to the CemA family.

The protein localises to the cell inner membrane. Required for H(+) efflux immediately after light irradiation to form a rapid H(+) concentration gradient across the thylakoid membranes. Together with PxcL, contributes to transient H(+) uptake following dark to light transition. This Synechococcus sp. (strain CC9605) protein is Proton extrusion protein PxcA.